A 145-amino-acid polypeptide reads, in one-letter code: Small ribosomal subunit protein eS12A (145 aa).

Belongs to the eukaryotic ribosomal protein eS12 family. As to quaternary structure, component of the small ribosomal subunit (SSU). Mature yeast ribosomes consist of a small (40S) and a large (60S) subunit. The 40S small subunit contains 1 molecule of ribosomal RNA (18S rRNA) and at least 33 different proteins. The large 60S subunit contains 3 rRNA molecules (25S, 5.8S and 5S rRNA) and at least 46 different proteins.

It localises to the cytoplasm. Its function is as follows. Component of the ribosome, a large ribonucleoprotein complex responsible for the synthesis of proteins in the cell. The small ribosomal subunit (SSU) binds messenger RNAs (mRNAs) and translates the encoded message by selecting cognate aminoacyl-transfer RNA (tRNA) molecules. The large subunit (LSU) contains the ribosomal catalytic site termed the peptidyl transferase center (PTC), which catalyzes the formation of peptide bonds, thereby polymerizing the amino acids delivered by tRNAs into a polypeptide chain. The nascent polypeptides leave the ribosome through a tunnel in the LSU and interact with protein factors that function in enzymatic processing, targeting, and the membrane insertion of nascent chains at the exit of the ribosomal tunnel. The chain is Small ribosomal subunit protein eS12A (rps1201) from Schizosaccharomyces pombe (strain 972 / ATCC 24843) (Fission yeast).